The sequence spans 424 residues: Serine--tRNA ligase (424 aa).

The segment at 109–129 is disordered; sequence QEDVPYGESEEDNREERKWGD. 231-233 contributes to the L-serine binding site; sequence TAE. Position 262-264 (262-264) interacts with ATP; sequence RSE. Residue Glu285 participates in L-serine binding. Residue 349 to 352 coordinates ATP; the sequence is EISS. An L-serine-binding site is contributed by Ser385.

This sequence belongs to the class-II aminoacyl-tRNA synthetase family. Type-1 seryl-tRNA synthetase subfamily. In terms of assembly, homodimer. The tRNA molecule binds across the dimer.

Its subcellular location is the cytoplasm. It carries out the reaction tRNA(Ser) + L-serine + ATP = L-seryl-tRNA(Ser) + AMP + diphosphate + H(+). It catalyses the reaction tRNA(Sec) + L-serine + ATP = L-seryl-tRNA(Sec) + AMP + diphosphate + H(+). Its pathway is aminoacyl-tRNA biosynthesis; selenocysteinyl-tRNA(Sec) biosynthesis; L-seryl-tRNA(Sec) from L-serine and tRNA(Sec): step 1/1. Functionally, catalyzes the attachment of serine to tRNA(Ser). Is also able to aminoacylate tRNA(Sec) with serine, to form the misacylated tRNA L-seryl-tRNA(Sec), which will be further converted into selenocysteinyl-tRNA(Sec). The chain is Serine--tRNA ligase from Shouchella clausii (strain KSM-K16) (Alkalihalobacillus clausii).